Consider the following 313-residue polypeptide: CBK1 kinase activator protein MOB2 (313 aa).

The disordered stretch occupies residues 1 to 109 (MSFLNTIRGL…KRSSIQTTKS (109 aa)). Over residues 23–69 (PSNNAIYSHSNLSGNGLRRTQSPTKFSPSKLSSKGAQGSAAYTSSPT) the composition is skewed to polar residues. A phosphoserine; by CDC28 mark is found at Ser-44, Ser-51, Ser-67, and Ser-97. Over residues 76-97 (QSLQHQDSQSSLQYQQQSGSVS) the composition is skewed to low complexity. Polar residues predominate over residues 98-109 (PSKRSSIQTTKS).

Belongs to the MOB1/phocein family. Interacts with protein kinase CBK1 to form the RAM CBK1-MOB2 kinase complex. Phosphorylated by CDC28 at Ser-44, Ser-51, Ser-67, and Ser-97. Phosphorylation occurs during bud emergence and is maintained until the G2/M transition. Dephosphorylated at the end of mitosis. Phosphorylation is required for the maintenance of polarisome components in hyphae.

The protein resides in the nucleus. It is found in the cytoplasm. Functionally, functions as an activator subunit for the CBK1 protein kinase. Part of the regulation of ACE2 activity and cellular morphogenesis (RAM) signaling network. The RAM network is critically required for hyphal growth as well as normal vegetative growth, and for polarization of lipid rafts and the actin cytoskeleton. It play an essential role in biofilm formation. The RAM network also plays a role in serum- and antifungal azoles-induced activation of ergosterol biosynthesis genes, especially those involved in the late steps of ergosterol biosynthesis. The polypeptide is CBK1 kinase activator protein MOB2 (MOB2) (Candida albicans (strain SC5314 / ATCC MYA-2876) (Yeast)).